The chain runs to 506 residues: Vinckepain-1 (506 aa).

Topologically, residues 1–32 are cytoplasmic; that stretch reads MSDNIGQINFTIPGIQSLDENDTYLKINHKKT. Residues 1–262 constitute a propeptide, activation peptide; it reads MSDNIGQINF…LISVDNKSKD (262 aa). Residues 33 to 53 traverse the membrane as a helical; Signal-anchor for type II membrane protein segment; it reads IKICAYAITAIALFFIGGVFF. The Lumenal segment spans residues 54–506; that stretch reads KNQAKINALD…VGSDVFFPIY (453 aa). Asn133 and Asn258 each carry an N-linked (GlcNAc...) asparagine glycan. 4 disulfides stabilise this stretch: Cys284–Cys326, Cys319–Cys359, Cys344–Cys364, and Cys413–Cys495. The active site involves Cys287. Residue Asn418 is glycosylated (N-linked (GlcNAc...) asparagine). Catalysis depends on residues His419 and Asn470.

It belongs to the peptidase C1 family.

It localises to the membrane. Cysteine protease. The polypeptide is Vinckepain-1 (Plasmodium vinckei).